The chain runs to 266 residues: Large ribosomal subunit protein uL4 (266 aa).

It belongs to the universal ribosomal protein uL4 family. In terms of assembly, part of the 50S ribosomal subunit.

In terms of biological role, one of the primary rRNA binding proteins, this protein initially binds near the 5'-end of the 23S rRNA. It is important during the early stages of 50S assembly. It makes multiple contacts with different domains of the 23S rRNA in the assembled 50S subunit and ribosome. Forms part of the polypeptide exit tunnel. This is Large ribosomal subunit protein uL4 from Sulfurisphaera tokodaii (strain DSM 16993 / JCM 10545 / NBRC 100140 / 7) (Sulfolobus tokodaii).